Reading from the N-terminus, the 175-residue chain is uncharacterized protein (175 aa).

The 148-residue stretch at 10–157 (LFELYAELIH…AERLFRDLVT (148 aa)) folds into the HTH marR-type domain. Positions 68–91 (VTSIAEKMNTTKATVSRISTKLLG) form a DNA-binding region, H-T-H motif.

It localises to the cytoplasm. This is an uncharacterized protein from Bacillus subtilis (strain 168).